The primary structure comprises 290 residues: Small ribosomal subunit biogenesis GTPase RsgA (290 aa).

Residues Lys61 to Leu218 form the CP-type G domain. Residues Asn110–Asp113 and Gly161–Thr169 each bind GTP. Residues Cys243, Cys248, His250, and Cys256 each coordinate Zn(2+).

It belongs to the TRAFAC class YlqF/YawG GTPase family. RsgA subfamily. Monomer. Associates with 30S ribosomal subunit, binds 16S rRNA. Requires Zn(2+) as cofactor.

Its subcellular location is the cytoplasm. One of several proteins that assist in the late maturation steps of the functional core of the 30S ribosomal subunit. Helps release RbfA from mature subunits. May play a role in the assembly of ribosomal proteins into the subunit. Circularly permuted GTPase that catalyzes slow GTP hydrolysis, GTPase activity is stimulated by the 30S ribosomal subunit. This chain is Small ribosomal subunit biogenesis GTPase RsgA, found in Clostridium beijerinckii (strain ATCC 51743 / NCIMB 8052) (Clostridium acetobutylicum).